Here is a 239-residue protein sequence, read N- to C-terminus: Glucosamine-6-phosphate deaminase (239 aa).

Residue D62 is the Proton acceptor; for enolization step of the active site. N128 serves as the catalytic For ring-opening step. H130 (proton acceptor; for ring-opening step) is an active-site residue. E135 serves as the catalytic For ring-opening step.

Belongs to the glucosamine/galactosamine-6-phosphate isomerase family. NagB subfamily.

It catalyses the reaction alpha-D-glucosamine 6-phosphate + H2O = beta-D-fructose 6-phosphate + NH4(+). The protein operates within amino-sugar metabolism; N-acetylneuraminate degradation; D-fructose 6-phosphate from N-acetylneuraminate: step 5/5. Its function is as follows. Catalyzes the reversible isomerization-deamination of glucosamine 6-phosphate (GlcN6P) to form fructose 6-phosphate (Fru6P) and ammonium ion. The polypeptide is Glucosamine-6-phosphate deaminase (Lactobacillus helveticus (strain DPC 4571)).